The sequence spans 489 residues: Protein nucleotidyltransferase YdiU (489 aa).

Positions 88, 90, 91, 111, 123, 124, 174, and 181 each coordinate ATP. The active-site Proton acceptor is Asp250. Positions 251 and 260 each coordinate Mg(2+). Residue Asp260 coordinates ATP.

Belongs to the SELO family. It depends on Mg(2+) as a cofactor. Mn(2+) serves as cofactor.

The catalysed reaction is L-seryl-[protein] + ATP = 3-O-(5'-adenylyl)-L-seryl-[protein] + diphosphate. It carries out the reaction L-threonyl-[protein] + ATP = 3-O-(5'-adenylyl)-L-threonyl-[protein] + diphosphate. The enzyme catalyses L-tyrosyl-[protein] + ATP = O-(5'-adenylyl)-L-tyrosyl-[protein] + diphosphate. It catalyses the reaction L-histidyl-[protein] + UTP = N(tele)-(5'-uridylyl)-L-histidyl-[protein] + diphosphate. The catalysed reaction is L-seryl-[protein] + UTP = O-(5'-uridylyl)-L-seryl-[protein] + diphosphate. It carries out the reaction L-tyrosyl-[protein] + UTP = O-(5'-uridylyl)-L-tyrosyl-[protein] + diphosphate. Its function is as follows. Nucleotidyltransferase involved in the post-translational modification of proteins. It can catalyze the addition of adenosine monophosphate (AMP) or uridine monophosphate (UMP) to a protein, resulting in modifications known as AMPylation and UMPylation. This is Protein nucleotidyltransferase YdiU from Vibrio cholerae serotype O1 (strain ATCC 39315 / El Tor Inaba N16961).